Here is a 145-residue protein sequence, read N- to C-terminus: Ribonuclease HI (145 aa).

Residues 1 to 142 (MNQTVYLYTD…ADDLANRGAA (142 aa)) enclose the RNase H type-1 domain. Positions 10, 48, 70, and 134 each coordinate Mg(2+).

Belongs to the RNase H family. Monomer. Requires Mg(2+) as cofactor.

Its subcellular location is the cytoplasm. The catalysed reaction is Endonucleolytic cleavage to 5'-phosphomonoester.. Its function is as follows. Endonuclease that specifically degrades the RNA of RNA-DNA hybrids. This chain is Ribonuclease HI, found in Neisseria meningitidis serogroup A / serotype 4A (strain DSM 15465 / Z2491).